We begin with the raw amino-acid sequence, 211 residues long: MVTKEQLKEKLKLYVILDRKLGNGVPLRQQAQLAIAGGATAIQLRDKEMKGRDYYQAALVIKDVCKENNVLFIVNDRLDVALAAEADGVHLGQEDLPLHAAKKLAPPGFIIGISAVNVEQAKLAEKGGADYLGVGDVFGTASKPDAKLTGVDMLKMICQSTSLPCVAIGGINVNNAKIVLDAGAIGIAVISAVVSQKDITGAAKALRELIP.

4-amino-2-methyl-5-(diphosphooxymethyl)pyrimidine contacts are provided by residues 43–47 (QLRDK) and N75. Mg(2+)-binding residues include D76 and D95. S114 serves as a coordination point for 4-amino-2-methyl-5-(diphosphooxymethyl)pyrimidine. 140-142 (TAS) is a 2-[(2R,5Z)-2-carboxy-4-methylthiazol-5(2H)-ylidene]ethyl phosphate binding site. K143 is a 4-amino-2-methyl-5-(diphosphooxymethyl)pyrimidine binding site. Residues G170 and 190–191 (IS) each bind 2-[(2R,5Z)-2-carboxy-4-methylthiazol-5(2H)-ylidene]ethyl phosphate.

The protein belongs to the thiamine-phosphate synthase family. Mg(2+) is required as a cofactor.

It carries out the reaction 2-[(2R,5Z)-2-carboxy-4-methylthiazol-5(2H)-ylidene]ethyl phosphate + 4-amino-2-methyl-5-(diphosphooxymethyl)pyrimidine + 2 H(+) = thiamine phosphate + CO2 + diphosphate. The enzyme catalyses 2-(2-carboxy-4-methylthiazol-5-yl)ethyl phosphate + 4-amino-2-methyl-5-(diphosphooxymethyl)pyrimidine + 2 H(+) = thiamine phosphate + CO2 + diphosphate. The catalysed reaction is 4-methyl-5-(2-phosphooxyethyl)-thiazole + 4-amino-2-methyl-5-(diphosphooxymethyl)pyrimidine + H(+) = thiamine phosphate + diphosphate. Its pathway is cofactor biosynthesis; thiamine diphosphate biosynthesis; thiamine phosphate from 4-amino-2-methyl-5-diphosphomethylpyrimidine and 4-methyl-5-(2-phosphoethyl)-thiazole: step 1/1. Its function is as follows. Condenses 4-methyl-5-(beta-hydroxyethyl)thiazole monophosphate (THZ-P) and 2-methyl-4-amino-5-hydroxymethyl pyrimidine pyrophosphate (HMP-PP) to form thiamine monophosphate (TMP). The polypeptide is Thiamine-phosphate synthase (Coprothermobacter proteolyticus (strain ATCC 35245 / DSM 5265 / OCM 4 / BT)).